A 923-amino-acid polypeptide reads, in one-letter code: Dynein axonemal intermediate chain 3 (923 aa).

The disordered stretch occupies residues 1-35; that stretch reads MAPKPPKSPKGQKKGKKNMKQQLLVPEEEEPMNME. The segment covering 10 to 19 has biased composition (basic residues); the sequence is KGQKKGKKNM. 4 WD repeats span residues 398 to 438, 480 to 536, 702 to 741, and 745 to 785; these read ESPD…DRIE, GHRK…PAVT, VHDGAVHTIQRSPFFNDIVLTVGGWNVAIWKEEVMTGPLL, and CGPK…HEPA. A coiled-coil region spans residues 869–889; sequence LELVKKKAKIYQKTKEQMEAE.

Interacts with ACTR2; this interaction reduces binding of the Arp2/3 complex to the VCA domain of nucleation promoting factors. Part of the multisubunit axonemal dynein complex formed at least of two heavy chains and a number of intermediate and light chains. Found in a associated with the catalytic heavy chain DNAH2, the intermediate chain DNAI4, and the light chain DYNLT1. In terms of tissue distribution, strongly expressed in the testes. Detected also in brain and lung tissues.

The protein resides in the cytoplasm. Its function is as follows. Acts as a negative regulator of cell migration, invasion, and metastasis downstream of p53/TP53, through inhibition of Arp2/3 complex-mediated actin polymerization. Via its association with the multisubunit axonemal dynein complex, is potentially involved in the regulation of cilia function. May play a role in osteogenesis of dental tissue-derived mesenchymal stem cells. The polypeptide is Dynein axonemal intermediate chain 3 (Dnai3) (Mus musculus (Mouse)).